The sequence spans 202 residues: Na(+)-translocating NADH-quinone reductase subunit E (202 aa).

6 helical membrane-spanning segments follow: residues 11 to 31, 35 to 55, 81 to 101, 114 to 134, 144 to 164, and 180 to 200; these read SVFI…FIAI, VETA…TVPA, FLGF…LEML, GIYL…LFMV, VVYG…LAGI, and LGIA…FSGI.

It belongs to the NqrDE/RnfAE family. Composed of six subunits; NqrA, NqrB, NqrC, NqrD, NqrE and NqrF.

The protein localises to the cell inner membrane. It catalyses the reaction a ubiquinone + n Na(+)(in) + NADH + H(+) = a ubiquinol + n Na(+)(out) + NAD(+). Its function is as follows. NQR complex catalyzes the reduction of ubiquinone-1 to ubiquinol by two successive reactions, coupled with the transport of Na(+) ions from the cytoplasm to the periplasm. NqrA to NqrE are probably involved in the second step, the conversion of ubisemiquinone to ubiquinol. This Azotobacter vinelandii (strain DJ / ATCC BAA-1303) protein is Na(+)-translocating NADH-quinone reductase subunit E.